The following is a 296-amino-acid chain: Phosphoribosylaminoimidazole-succinocarboxamide synthase (296 aa).

Belongs to the SAICAR synthetase family.

It carries out the reaction 5-amino-1-(5-phospho-D-ribosyl)imidazole-4-carboxylate + L-aspartate + ATP = (2S)-2-[5-amino-1-(5-phospho-beta-D-ribosyl)imidazole-4-carboxamido]succinate + ADP + phosphate + 2 H(+). It participates in purine metabolism; IMP biosynthesis via de novo pathway; 5-amino-1-(5-phospho-D-ribosyl)imidazole-4-carboxamide from 5-amino-1-(5-phospho-D-ribosyl)imidazole-4-carboxylate: step 1/2. This chain is Phosphoribosylaminoimidazole-succinocarboxamide synthase, found in Citrifermentans bemidjiense (strain ATCC BAA-1014 / DSM 16622 / JCM 12645 / Bem) (Geobacter bemidjiensis).